Reading from the N-terminus, the 1230-residue chain is Serine/threonine-protein kinase PDK1 (1230 aa).

Residues 1–277 (MASSHFGPAS…ASSGALKKHS (277 aa)) are disordered. Residues 34-50 (SSSSSSRSTTTCSSTSS) show a composition bias toward low complexity. Polar residues predominate over residues 62–76 (ETSTAATSRSQLPSN). The segment covering 77–87 (RHSENEAEHDT) has biased composition (basic and acidic residues). Polar residues-rich tracts occupy residues 107-117 (PRSNRLGTSPQ) and 140-175 (SKRQ…SSTI). Basic and acidic residues predominate over residues 185 to 202 (PNDRLSHDRESHSAERPR). A compositionally biased stretch (polar residues) spans 217–226 (STPSSPTNSY). Over residues 252-262 (ARDGDDRERRQ) the composition is skewed to basic and acidic residues. In terms of domain architecture, Protein kinase spans 281 to 801 (WVLGEELGVG…ITFIKTHPFF (521 aa)). ATP is bound by residues 291 to 293 (SYS) and Lys319. Disordered regions lie at residues 345-522 (LSDP…RSGA) and 534-597 (TLPP…KMSA). Polar residues-rich tracts occupy residues 378 to 397 (TASI…TVSN) and 408 to 433 (IVTT…SPTA). Basic and acidic residues-rich tracts occupy residues 466 to 494 (GGED…DNMT) and 502 to 521 (VREE…ERSG). Positions 535 to 544 (LPPPQIPSTP) are enriched in pro residues. A compositionally biased stretch (basic and acidic residues) spans 555–569 (DGHRTSRETPRDRPH). ATP-binding positions include 621 to 623 (SLA) and Glu627. The active-site Proton acceptor is Asp666. Glu670 and Asp684 together coordinate ATP. Residues 850–859 (EDEDGFEYDA) show a composition bias toward acidic residues. Disordered stretches follow at residues 850-871 (EDED…GGAV), 907-955 (LGED…GGNR), 972-1035 (GGGM…SDEA), and 1116-1152 (EADG…GGGH). Residues 927–942 (GKREKEVEKKKGEKAR) are compositionally biased toward basic and acidic residues. 3 stretches are compositionally biased toward low complexity: residues 977–992 (GSAT…RTPG), 1002–1030 (RPGS…GASM), and 1120–1137 (DPAG…SHVE). Positions 1138 to 1152 (SGGGGVGGGGRGGGH) are enriched in gly residues.

The protein belongs to the protein kinase superfamily. AGC Ser/Thr protein kinase family. PDPK1 subfamily.

The catalysed reaction is L-seryl-[protein] + ATP = O-phospho-L-seryl-[protein] + ADP + H(+). It catalyses the reaction L-threonyl-[protein] + ATP = O-phospho-L-threonyl-[protein] + ADP + H(+). In terms of biological role, serine/threonine-protein kinase that functions in the sphingolipid-mediated signaling pathway, regulating organization of the plasma membrane. May phosphorylate PKC1 to activate the cell integrity MAPK cascade during cell wall and membrane stress. May regulate sphingolipid metabolism upstream of YPK1. This is Serine/threonine-protein kinase PDK1 from Cryptococcus neoformans var. grubii serotype A (strain H99 / ATCC 208821 / CBS 10515 / FGSC 9487) (Filobasidiella neoformans var. grubii).